The sequence spans 349 residues: Anthranilate phosphoribosyltransferase (349 aa).

Residues G82, 85–86, 92–95, 110–118, and S122 contribute to the 5-phospho-alpha-D-ribose 1-diphosphate site; these read GD, NVST, and KHGNRAVSG. G82 contacts anthranilate. S94 contributes to the Mg(2+) binding site. N113 is an anthranilate binding site. Anthranilate is bound at residue R168. D227 and E228 together coordinate Mg(2+).

This sequence belongs to the anthranilate phosphoribosyltransferase family. As to quaternary structure, homodimer. It depends on Mg(2+) as a cofactor.

It carries out the reaction N-(5-phospho-beta-D-ribosyl)anthranilate + diphosphate = 5-phospho-alpha-D-ribose 1-diphosphate + anthranilate. It participates in amino-acid biosynthesis; L-tryptophan biosynthesis; L-tryptophan from chorismate: step 2/5. Functionally, catalyzes the transfer of the phosphoribosyl group of 5-phosphorylribose-1-pyrophosphate (PRPP) to anthranilate to yield N-(5'-phosphoribosyl)-anthranilate (PRA). The sequence is that of Anthranilate phosphoribosyltransferase from Pseudomonas fluorescens (strain Pf0-1).